The chain runs to 303 residues: Phosphatidylglycerol--prolipoprotein diacylglyceryl transferase (303 aa).

The next 4 helical transmembrane spans lie at 18–38 (LGPF…LVGL), 58–78 (LLPI…VAFE), 106–126 (IWGG…SIIF), and 133–153 (EPFW…QAIG). Residue arginine 154 coordinates a 1,2-diacyl-sn-glycero-3-phospho-(1'-sn-glycerol). The next 3 membrane-spanning stretches (helical) occupy residues 193 to 213 (PTFL…IFLF), 223 to 243 (LPPG…RFWI), and 266 to 286 (IAQL…WRIY).

This sequence belongs to the Lgt family.

It is found in the cell inner membrane. The catalysed reaction is L-cysteinyl-[prolipoprotein] + a 1,2-diacyl-sn-glycero-3-phospho-(1'-sn-glycerol) = an S-1,2-diacyl-sn-glyceryl-L-cysteinyl-[prolipoprotein] + sn-glycerol 1-phosphate + H(+). It participates in protein modification; lipoprotein biosynthesis (diacylglyceryl transfer). In terms of biological role, catalyzes the transfer of the diacylglyceryl group from phosphatidylglycerol to the sulfhydryl group of the N-terminal cysteine of a prolipoprotein, the first step in the formation of mature lipoproteins. The protein is Phosphatidylglycerol--prolipoprotein diacylglyceryl transferase of Prochlorococcus marinus (strain NATL1A).